We begin with the raw amino-acid sequence, 495 residues long: Angiopoietin-2 (495 aa).

Positions 1-18 are cleaved as a signal peptide; the sequence is MWQIVFFTLSCDLVRAAA. Residues Asn-88, Asn-118, Asn-132, Asn-150, Asn-239, and Asn-303 are each glycosylated (N-linked (GlcNAc...) asparagine). Residues 165 to 247 are a coiled coil; sequence STNKLEKQIL…VNNSVLQKQQ (83 aa). In terms of domain architecture, Fibrinogen C-terminal spans 274 to 494; it reads KEEQIIYRDC…GTTMMIRPAD (221 aa). A disulfide bridge connects residues Cys-283 and Cys-312. Ca(2+)-binding residues include Asp-428, Asp-430, Cys-432, and Cys-434. 2 disulfides stabilise this stretch: Cys-432–Cys-434 and Cys-436–Cys-449.

Interacts with TEK/TIE2, competing for the same binding site as ANGPT1. Interacts with ITGA5. Interacts with SVEP1/polydom. Interacts with THBD; this interaction significantly inhibits the generation of activated PC and TAFIa/CPB2 by the thrombin/thrombomodulin complex.

It localises to the secreted. Functionally, binds to TEK/TIE2, competing for the ANGPT1 binding site, and modulating ANGPT1 signaling. Can induce tyrosine phosphorylation of TEK/TIE2 in the absence of ANGPT1. In the absence of angiogenic inducers, such as VEGF, ANGPT2-mediated loosening of cell-matrix contacts may induce endothelial cell apoptosis with consequent vascular regression. In concert with VEGF, it may facilitate endothelial cell migration and proliferation, thus serving as a permissive angiogenic signal. Involved in the regulation of lymphangiogenesis. In Canis lupus familiaris (Dog), this protein is Angiopoietin-2 (ANGPT2).